A 280-amino-acid polypeptide reads, in one-letter code: Probable inactive shikimate kinase like 1, chloroplastic (280 aa).

The transit peptide at 1–54 (MEIFSASASLTLTGFVPRLLPLLSPQARTTLCKPLLSSSSTRLISCHSRIAPSR) directs the protein to the chloroplast.

The protein belongs to the shikimate kinase family.

The protein localises to the plastid. Its subcellular location is the chloroplast. Its function is as follows. Required for chloroplast biogenesis. The chain is Probable inactive shikimate kinase like 1, chloroplastic (SKL1) from Arabidopsis thaliana (Mouse-ear cress).